Consider the following 422-residue polypeptide: Exodeoxyribonuclease 7 large subunit (422 aa).

The protein belongs to the XseA family. In terms of assembly, heterooligomer composed of large and small subunits.

It localises to the cytoplasm. The catalysed reaction is Exonucleolytic cleavage in either 5'- to 3'- or 3'- to 5'-direction to yield nucleoside 5'-phosphates.. Its function is as follows. Bidirectionally degrades single-stranded DNA into large acid-insoluble oligonucleotides, which are then degraded further into small acid-soluble oligonucleotides. The chain is Exodeoxyribonuclease 7 large subunit from Leptospira interrogans serogroup Icterohaemorrhagiae serovar copenhageni (strain Fiocruz L1-130).